We begin with the raw amino-acid sequence, 252 residues long: uncharacterized protein (252 aa).

The region spanning isoleucine 13 to leucine 247 is the ABC transporter domain. Position 45–52 (glycine 45–serine 52) interacts with ATP.

It belongs to the ABC transporter superfamily.

The protein localises to the cell inner membrane. Its function is as follows. Probably part of a binding-protein-dependent transport system YdhWXYZ for an amino acid. Probably responsible for energy coupling to the transport system. This is an uncharacterized protein from Escherichia coli (strain K12).